Consider the following 215-residue polypeptide: V-type ATP synthase subunit D (215 aa).

It belongs to the V-ATPase D subunit family.

Functionally, produces ATP from ADP in the presence of a proton gradient across the membrane. The sequence is that of V-type ATP synthase subunit D from Anaeromyxobacter sp. (strain Fw109-5).